Consider the following 75-residue polypeptide: Small ribosomal subunit protein bS16 (75 aa).

Belongs to the bacterial ribosomal protein bS16 family.

The chain is Small ribosomal subunit protein bS16 from Campylobacter jejuni subsp. jejuni serotype O:23/36 (strain 81-176).